The primary structure comprises 234 residues: HTH-type transcriptional regulator ArcR (234 aa).

40 to 129 (VRHYTKGQVI…MAFLCKANDD (90 aa)) is an a nucleoside 3',5'-cyclic phosphate binding site. In terms of domain architecture, HTH crp-type spans 155–228 (KFAKDRIIKL…HKNWLVSKHL (74 aa)). A DNA-binding region (H-T-H motif) is located at residues 188-207 (IQLMSDMAGISRETAGHIIH).

It is found in the cytoplasm. In terms of biological role, positively regulates the expression of the arcABDCR operon under anaerobic conditions, thus playing an essential role in arginine catabolism. May also control the expression of genes encoding proteins which are involved in anaerobic metabolism. Can bind cyclic AMP. The chain is HTH-type transcriptional regulator ArcR (arcR) from Staphylococcus aureus (strain Mu50 / ATCC 700699).